The following is a 624-amino-acid chain: FAD-dependent monooxygenase apdD (624 aa).

FAD contacts are provided by glutamate 73 and aspartate 359.

This sequence belongs to the paxM FAD-dependent monooxygenase family. FAD serves as cofactor.

It functions in the pathway secondary metabolite biosynthesis. FAD-dependent monooxygenase; part of the gene cluster that mediates the biosynthesis of aspyridones. The polyketide-amino acid backbone preaspyridone A is first assembled by the PKS-NRPS hybrid apdA. The assembly of preaspyridone A is initiated by loading of malonyl-CoA onto apdA, followed by decarboxylation to yield the acetyl starter unit. The growing polyketide chain then elongates into a tetraketide. The adpA PKS module catalyzes three Claisen condensations, as well as beta-keto processing and methylation. Alpha-methylation step during polyketide synthesis is a prerequisite and a key checkpoint for chain transfer between PKS and NRPS modules. The downstream NRPS module contains the condensation (C), adenylation (A), and thiolation (T) domains and catalyzes the incorporation of tyrosine via the formation of the L-tyrosinyl-thioester and the amide linkage between L-tyrosinyl-thioester and the tetraketide. The bimodular assembly line is terminated with a reductase (R) domain that facilitates formation and release of the tetramic acid product. Because apdA lacks a designated enoylreductase (ER) domain, the required activity is provided the enoyl reductase apdC. ApdC appears to operate with different stereoselectivity in different PKS cycle. Combined with apdC, apdA is proposed to synthesize preaspyridone A via about 20 enzymatic steps. A number of oxidative steps performed successively by the cytochrome P450 monooxygenases apdE and apdB are required for the conversion of preaspyridone A to aspyridone A. The cytochrome P450 monooxygenase apdE is responsible for the oxidative dephenylation of preaspyridone A. Finally, the predicted FAD-dependent monooxygenase apdD and the acyl-CoA dehydrogenase apdG may be involved in the transformation of aspyridone A into aspyridone B. In Emericella nidulans (strain FGSC A4 / ATCC 38163 / CBS 112.46 / NRRL 194 / M139) (Aspergillus nidulans), this protein is FAD-dependent monooxygenase apdD.